The primary structure comprises 202 residues: uncharacterized protein (202 aa).

Residues 175 to 195 (INTGIALFIILTSLLVYFIQF) traverse the membrane as a helical segment.

It localises to the membrane. This is an uncharacterized protein from Dictyostelium discoideum (Social amoeba).